Reading from the N-terminus, the 436-residue chain is UDP-N-acetylmuramate--L-alanine ligase (436 aa).

Residue 111–117 coordinates ATP; the sequence is GTHGKTS.

Belongs to the MurCDEF family.

The protein resides in the cytoplasm. The catalysed reaction is UDP-N-acetyl-alpha-D-muramate + L-alanine + ATP = UDP-N-acetyl-alpha-D-muramoyl-L-alanine + ADP + phosphate + H(+). The protein operates within cell wall biogenesis; peptidoglycan biosynthesis. Cell wall formation. This is UDP-N-acetylmuramate--L-alanine ligase from Lactiplantibacillus plantarum (strain ATCC BAA-793 / NCIMB 8826 / WCFS1) (Lactobacillus plantarum).